A 295-amino-acid chain; its full sequence is Glutamyl-Q tRNA(Asp) synthetase (295 aa).

L-glutamate contacts are provided by residues 9–13 (RFAPT) and E45. The 'HIGH' region motif lies at 12–22 (PTPSGFLHFGS). Zn(2+) contacts are provided by C101, C103, Y115, and C119. Residues Y172 and R190 each contribute to the L-glutamate site. Positions 228-232 (KLGKS) match the 'KMSKS' region motif. K231 provides a ligand contact to ATP.

It belongs to the class-I aminoacyl-tRNA synthetase family. GluQ subfamily. The cofactor is Zn(2+).

Catalyzes the tRNA-independent activation of glutamate in presence of ATP and the subsequent transfer of glutamate onto a tRNA(Asp). Glutamate is transferred on the 2-amino-5-(4,5-dihydroxy-2-cyclopenten-1-yl) moiety of the queuosine in the wobble position of the QUC anticodon. In Pseudomonas entomophila (strain L48), this protein is Glutamyl-Q tRNA(Asp) synthetase.